Reading from the N-terminus, the 347-residue chain is MKIYYDEDANIEIIKGMNVSIIGYGSQGNAHANNLHESGVSVTVGLREGSSSWAKAEEAGLKVQTVADSVIQADLVMILAPDEFQKNIYETEIKPNLKTSAILAFAHGFNIHFEKIVPEATNSVIMIAPKGPGHTVRSTYTNGGGVPSLIAIYEDALSDEDYSAKDVALSYAKANGGTRAGVLETSFKEETETDLFGEQAVLCGGLTALIKAGFETLVEAGYSEEMAYFECLHETKLITDLIQEGGIANMHYSISNTAEYGDYVSGPKVITSDTKKAMKGILENIQSGKFADDFLNDCRQSNDGTGGPVMKSNREATKIHPIESVGAELRSKMKFLNSQKLVDKEIN.

One can recognise a KARI N-terminal Rossmann domain in the interval 1–185; that stretch reads MKIYYDEDAN…GGTRAGVLET (185 aa). NADP(+) is bound by residues 24–27, Arg-47, Ser-50, Ser-52, and 82–85; these read YGSQ and DEFQ. Residue His-107 is part of the active site. Gly-133 contacts NADP(+). Positions 186-336 constitute a KARI C-terminal knotted domain; it reads SFKEETETDL…AELRSKMKFL (151 aa). Asp-194, Glu-198, Glu-230, and Glu-234 together coordinate Mg(2+). Position 255 (Ser-255) interacts with substrate.

The protein belongs to the ketol-acid reductoisomerase family. The cofactor is Mg(2+).

It catalyses the reaction (2R)-2,3-dihydroxy-3-methylbutanoate + NADP(+) = (2S)-2-acetolactate + NADPH + H(+). The catalysed reaction is (2R,3R)-2,3-dihydroxy-3-methylpentanoate + NADP(+) = (S)-2-ethyl-2-hydroxy-3-oxobutanoate + NADPH + H(+). Its pathway is amino-acid biosynthesis; L-isoleucine biosynthesis; L-isoleucine from 2-oxobutanoate: step 2/4. The protein operates within amino-acid biosynthesis; L-valine biosynthesis; L-valine from pyruvate: step 2/4. Functionally, involved in the biosynthesis of branched-chain amino acids (BCAA). Catalyzes an alkyl-migration followed by a ketol-acid reduction of (S)-2-acetolactate (S2AL) to yield (R)-2,3-dihydroxy-isovalerate. In the isomerase reaction, S2AL is rearranged via a Mg-dependent methyl migration to produce 3-hydroxy-3-methyl-2-ketobutyrate (HMKB). In the reductase reaction, this 2-ketoacid undergoes a metal-dependent reduction by NADPH to yield (R)-2,3-dihydroxy-isovalerate. This Gamma-proteobacterium EBAC31A08 protein is Ketol-acid reductoisomerase (NADP(+)).